The primary structure comprises 254 residues: Geranylgeranylglyceryl phosphate synthase (254 aa).

The Mg(2+) site is built by D28 and S57. Sn-glycerol 1-phosphate-binding positions include 176–182 (YLEAGSG), 207–208 (GG), and 229–230 (GT).

The protein belongs to the GGGP/HepGP synthase family. Group II subfamily. Mg(2+) serves as cofactor.

The protein localises to the cytoplasm. It carries out the reaction sn-glycerol 1-phosphate + (2E,6E,10E)-geranylgeranyl diphosphate = sn-3-O-(geranylgeranyl)glycerol 1-phosphate + diphosphate. Its pathway is membrane lipid metabolism; glycerophospholipid metabolism. Functionally, prenyltransferase that catalyzes the transfer of the geranylgeranyl moiety of geranylgeranyl diphosphate (GGPP) to the C3 hydroxyl of sn-glycerol-1-phosphate (G1P). This reaction is the first ether-bond-formation step in the biosynthesis of archaeal membrane lipids. The polypeptide is Geranylgeranylglyceryl phosphate synthase (Pyrococcus horikoshii (strain ATCC 700860 / DSM 12428 / JCM 9974 / NBRC 100139 / OT-3)).